Reading from the N-terminus, the 144-residue chain is Large ribosomal subunit protein uL16 (144 aa).

The protein belongs to the universal ribosomal protein uL16 family. In terms of assembly, part of the 50S ribosomal subunit.

In terms of biological role, binds 23S rRNA and is also seen to make contacts with the A and possibly P site tRNAs. This is Large ribosomal subunit protein uL16 from Porphyromonas gingivalis (strain ATCC 33277 / DSM 20709 / CIP 103683 / JCM 12257 / NCTC 11834 / 2561).